The following is an 81-amino-acid chain: Sulfur carrier protein TusA (81 aa).

C19 functions as the Cysteine persulfide intermediate in the catalytic mechanism.

It belongs to the sulfur carrier protein TusA family. In terms of assembly, interacts with IscS.

Its subcellular location is the cytoplasm. Its pathway is tRNA modification. Functionally, sulfur carrier protein involved in sulfur trafficking in the cell. Part of a sulfur-relay system required for 2-thiolation during synthesis of 2-thiouridine of the modified wobble base 5-methylaminomethyl-2-thiouridine (mnm(5)s(2)U) in tRNA. Interacts with IscS and stimulates its cysteine desulfurase activity. Accepts an activated sulfur from IscS, which is then transferred to TusD, and thus determines the direction of sulfur flow from IscS to 2-thiouridine formation. Also appears to be involved in sulfur transfer for the biosynthesis of molybdopterin. The chain is Sulfur carrier protein TusA from Escherichia coli (strain SMS-3-5 / SECEC).